We begin with the raw amino-acid sequence, 208 residues long: Ribosomal RNA small subunit methyltransferase G (208 aa).

Residues G78, F83, 101-103, 129-130, and R142 each bind S-adenosyl-L-methionine; these read ERS and IE.

This sequence belongs to the methyltransferase superfamily. RNA methyltransferase RsmG family.

The protein localises to the cytoplasm. Functionally, specifically methylates the N7 position of a guanine in 16S rRNA. The sequence is that of Ribosomal RNA small subunit methyltransferase G from Borrelia garinii subsp. bavariensis (strain ATCC BAA-2496 / DSM 23469 / PBi) (Borreliella bavariensis).